Reading from the N-terminus, the 199-residue chain is 5'-deoxynucleotidase YfbR (199 aa).

Residues arginine 18–tryptophan 19 and histidine 33 each bind substrate. The 113-residue stretch at valine 30–tyrosine 142 folds into the HD domain. Histidine 33, histidine 68, and aspartate 69 together coordinate a divalent metal cation. Residues aspartate 69, aspartate 77–threonine 80, and aspartate 137 each bind substrate. A divalent metal cation is bound at residue aspartate 137.

It belongs to the 5DNU family. As to quaternary structure, homodimer. The cofactor is a divalent metal cation.

It localises to the cytoplasm. The catalysed reaction is a 2'-deoxyribonucleoside 5'-phosphate + H2O = a 2'-deoxyribonucleoside + phosphate. Catalyzes the strictly specific dephosphorylation of 2'-deoxyribonucleoside 5'-monophosphates. The chain is 5'-deoxynucleotidase YfbR from Salmonella typhi.